The following is a 468-amino-acid chain: Ribulose bisphosphate carboxylase large chain (468 aa).

K4 is subject to N6,N6,N6-trimethyllysine. Residues N113 and T163 each contribute to the substrate site. The active-site Proton acceptor is the K165. Position 167 (K167) interacts with substrate. The Mg(2+) site is built by K191, D193, and E194. Position 191 is an N6-carboxylysine (K191). H284 serves as the catalytic Proton acceptor. Residues R285, H317, and S369 each contribute to the substrate site.

This sequence belongs to the RuBisCO large chain family. Type I subfamily. Heterohexadecamer of 8 large chains and 8 small chains; disulfide-linked. The disulfide link is formed within the large subunit homodimers. Requires Mg(2+) as cofactor. Post-translationally, the disulfide bond which can form in the large chain dimeric partners within the hexadecamer appears to be associated with oxidative stress and protein turnover.

The protein resides in the plastid. It localises to the chloroplast. The enzyme catalyses 2 (2R)-3-phosphoglycerate + 2 H(+) = D-ribulose 1,5-bisphosphate + CO2 + H2O. It carries out the reaction D-ribulose 1,5-bisphosphate + O2 = 2-phosphoglycolate + (2R)-3-phosphoglycerate + 2 H(+). RuBisCO catalyzes two reactions: the carboxylation of D-ribulose 1,5-bisphosphate, the primary event in carbon dioxide fixation, as well as the oxidative fragmentation of the pentose substrate in the photorespiration process. Both reactions occur simultaneously and in competition at the same active site. The protein is Ribulose bisphosphate carboxylase large chain of Pandorea jasminoides (Bower vine).